We begin with the raw amino-acid sequence, 418 residues long: Diaminopimelate decarboxylase (418 aa).

N6-(pyridoxal phosphate)lysine is present on Lys53. Pyridoxal 5'-phosphate contacts are provided by residues Gly223 and 264-267; that span reads EPGR. Substrate is bound by residues Arg267, Arg303, and Tyr307. The active-site Proton donor is the Cys338. Substrate is bound by residues Glu339 and Tyr374. Position 374 (Tyr374) interacts with pyridoxal 5'-phosphate.

This sequence belongs to the Orn/Lys/Arg decarboxylase class-II family. LysA subfamily. As to quaternary structure, homodimer. Pyridoxal 5'-phosphate is required as a cofactor.

It carries out the reaction meso-2,6-diaminopimelate + H(+) = L-lysine + CO2. It functions in the pathway amino-acid biosynthesis; L-lysine biosynthesis via DAP pathway; L-lysine from DL-2,6-diaminopimelate: step 1/1. Functionally, specifically catalyzes the decarboxylation of meso-diaminopimelate (meso-DAP) to L-lysine. The protein is Diaminopimelate decarboxylase of Buchnera aphidicola subsp. Baizongia pistaciae (strain Bp).